A 539-amino-acid chain; its full sequence is uncharacterized protein (539 aa).

The disordered stretch occupies residues alanine 316–glutamate 433. Positions histidine 318–lysine 352 are enriched in basic residues. Over residues lysine 362 to phenylalanine 384 the composition is skewed to basic and acidic residues. Residues asparagine 390 to glycine 402 show a composition bias toward polar residues.

This is an uncharacterized protein from Treponema pallidum (strain Nichols).